The following is a 237-amino-acid chain: Exosome complex component Rrp4 (237 aa).

The 73-residue stretch at 72–144 (GHIVVGKVVD…LSKDPVLTIK (73 aa)) folds into the S1 motif domain. Positions 152–211 (PRGTLVEIPPQKVPRVIGRRGSMVSMIEDLLGVKLIVGQNGRIVVVGDDPQRVEIAVLAV) constitute a KH domain.

The protein belongs to the RRP4 family. As to quaternary structure, component of the archaeal exosome complex. Forms a trimer of Rrp4 and/or Csl4 subunits. The trimer associates with a hexameric ring-like arrangement composed of 3 Rrp41-Rrp42 heterodimers.

The protein localises to the cytoplasm. Its function is as follows. Non-catalytic component of the exosome, which is a complex involved in RNA degradation. Increases the RNA binding and the efficiency of RNA degradation. Confers strong poly(A) specificity to the exosome. This chain is Exosome complex component Rrp4, found in Thermofilum pendens (strain DSM 2475 / Hrk 5).